Reading from the N-terminus, the 281-residue chain is MNPYIEILRPVNAVMAVITVMLMALITGRFDFSVLLASVVVFTATGAGNVINDYFDHEIDAINRPERPIPSGRISRGVAGVYSIILFALASLMGFYLGLLPGLVVVSSSLLMVYYAWRLKKRCLVGNITISFLTGLSFVFGGIVLGEVRASILLGFYAFLMTMAREIVKDMEDVEGDRAEGATTLPITHGMRISGVLAASFMLIASLTSPSLYLLGIFSALYIPVLLLAVAVFLRAAIMILRGQDRATASRVSRMIKVGMALTFIAFAAGSGTITALTGLS.

8 helical membrane-spanning segments follow: residues 7 to 27, 32 to 52, 72 to 91, 95 to 117, 128 to 148, 193 to 213, 214 to 234, and 258 to 278; these read ILRPVNAVMAVITVMLMALIT, FSVLLASVVVFTATGAGNVIN, GRISRGVAGVYSIILFALAS, FYLGLLPGLVVVSSSLLMVYYAW, ITISFLTGLSFVFGGIVLGEV, ISGVLAASFMLIASLTSPSLY, LLGIFSALYIPVLLLAVAVFL, and VGMALTFIAFAAGSGTITALT.

It belongs to the UbiA prenyltransferase family. DGGGP synthase subfamily. Mg(2+) is required as a cofactor.

It is found in the cell membrane. It carries out the reaction sn-3-O-(geranylgeranyl)glycerol 1-phosphate + (2E,6E,10E)-geranylgeranyl diphosphate = 2,3-bis-O-(geranylgeranyl)-sn-glycerol 1-phosphate + diphosphate. It participates in membrane lipid metabolism; glycerophospholipid metabolism. In terms of biological role, prenyltransferase that catalyzes the transfer of the geranylgeranyl moiety of geranylgeranyl diphosphate (GGPP) to the C2 hydroxyl of (S)-3-O-geranylgeranylglyceryl phosphate (GGGP). This reaction is the second ether-bond-formation step in the biosynthesis of archaeal membrane lipids. The sequence is that of Digeranylgeranylglyceryl phosphate synthase from Methanothermobacter thermautotrophicus (strain ATCC 29096 / DSM 1053 / JCM 10044 / NBRC 100330 / Delta H) (Methanobacterium thermoautotrophicum).